Reading from the N-terminus, the 423-residue chain is Replication factor C large subunit (423 aa).

50–57 (GPAGCGKT) lines the ATP pocket.

It belongs to the activator 1 small subunits family. RfcL subfamily. As to quaternary structure, heteromultimer composed of small subunits (RfcS) and large subunits (RfcL).

Functionally, part of the RFC clamp loader complex which loads the PCNA sliding clamp onto DNA. This Staphylothermus marinus (strain ATCC 43588 / DSM 3639 / JCM 9404 / F1) protein is Replication factor C large subunit.